Reading from the N-terminus, the 193-residue chain is Ribonuclease HII (193 aa).

Residues 15–193 (YIVAGVDEAG…SYHRKSFKFC (179 aa)) enclose the RNase H type-2 domain. A divalent metal cation is bound by residues aspartate 21, glutamate 22, and aspartate 112.

This sequence belongs to the RNase HII family. Requires Mn(2+) as cofactor. The cofactor is Mg(2+).

It is found in the cytoplasm. It catalyses the reaction Endonucleolytic cleavage to 5'-phosphomonoester.. Its function is as follows. Endonuclease that specifically degrades the RNA of RNA-DNA hybrids. The protein is Ribonuclease HII of Rickettsia typhi (strain ATCC VR-144 / Wilmington).